The sequence spans 583 residues: Putative glutaminase 3 (583 aa).

Positions 1-29 (MDNKEKEDEELSDELKDQPGPSEKPRTPT) are disordered. Positions 216, 265, 311, 318, 344, 396, and 414 each coordinate substrate. 3 ANK repeats span residues 482–514 (DGQNRFMYATKLGDIAAIKRFLLMGHDIHCKDY), 515–548 (DDRTVLHVAAAEGDVVTLEYVLSKWQEDPNPCDR), and 549–581 (YDRTPLDDAKHFNHTACVKLLEEAITVYNLKGQ).

It belongs to the glutaminase family.

It carries out the reaction L-glutamine + H2O = L-glutamate + NH4(+). In Caenorhabditis elegans, this protein is Putative glutaminase 3 (glna-3).